The following is a 604-amino-acid chain: Elongation factor 4 (604 aa).

A tr-type G domain is found at 8-190 (DKIRNFSIIA…AIVNRLPPPR (183 aa)). GTP-binding positions include 20 to 25 (DHGKST) and 137 to 140 (NKID).

The protein belongs to the TRAFAC class translation factor GTPase superfamily. Classic translation factor GTPase family. LepA subfamily.

The protein resides in the cell inner membrane. It catalyses the reaction GTP + H2O = GDP + phosphate + H(+). Functionally, required for accurate and efficient protein synthesis under certain stress conditions. May act as a fidelity factor of the translation reaction, by catalyzing a one-codon backward translocation of tRNAs on improperly translocated ribosomes. Back-translocation proceeds from a post-translocation (POST) complex to a pre-translocation (PRE) complex, thus giving elongation factor G a second chance to translocate the tRNAs correctly. Binds to ribosomes in a GTP-dependent manner. The sequence is that of Elongation factor 4 from Hyphomonas neptunium (strain ATCC 15444).